We begin with the raw amino-acid sequence, 609 residues long: Meiotically up-regulated gene 28 protein (609 aa).

RRM domains are found at residues 20–103 (ISIY…YTHI) and 419–499 (CNLF…YAEK).

Its subcellular location is the cytoplasm. Has a role in sporulation. The protein is Meiotically up-regulated gene 28 protein (mug28) of Schizosaccharomyces pombe (strain 972 / ATCC 24843) (Fission yeast).